A 97-amino-acid chain; its full sequence is Large ribosomal subunit protein uL23 (97 aa).

It belongs to the universal ribosomal protein uL23 family. In terms of assembly, part of the 50S ribosomal subunit. Contacts protein L29, and trigger factor when it is bound to the ribosome.

Functionally, one of the early assembly proteins it binds 23S rRNA. One of the proteins that surrounds the polypeptide exit tunnel on the outside of the ribosome. Forms the main docking site for trigger factor binding to the ribosome. The polypeptide is Large ribosomal subunit protein uL23 (Brachyspira hyodysenteriae (strain ATCC 49526 / WA1)).